The chain runs to 810 residues: Lon protease (810 aa).

One can recognise a Lon N-terminal domain in the interval 16–209; the sequence is YPVPPLRDIV…RVYAFMEGEI (194 aa). 361-368 provides a ligand contact to ATP; the sequence is GPPGVGKT. The Lon proteolytic domain maps to 598 to 779; sequence EDLVGVTTGL…DDVLKHALVR (182 aa). Active-site residues include Ser-685 and Lys-728.

Belongs to the peptidase S16 family. Homohexamer. Organized in a ring with a central cavity.

Its subcellular location is the cytoplasm. The catalysed reaction is Hydrolysis of proteins in presence of ATP.. ATP-dependent serine protease that mediates the selective degradation of mutant and abnormal proteins as well as certain short-lived regulatory proteins. Required for cellular homeostasis and for survival from DNA damage and developmental changes induced by stress. Degrades polypeptides processively to yield small peptide fragments that are 5 to 10 amino acids long. Binds to DNA in a double-stranded, site-specific manner. Involved in iron uptake. This is Lon protease from Azospirillum brasilense.